Consider the following 238-residue polypeptide: Probable transcriptional regulatory protein SPH_2064 (238 aa).

It belongs to the TACO1 family. YeeN subfamily.

It is found in the cytoplasm. This chain is Probable transcriptional regulatory protein SPH_2064, found in Streptococcus pneumoniae (strain Hungary19A-6).